We begin with the raw amino-acid sequence, 304 residues long: UDP-N-acetylenolpyruvoylglucosamine reductase (304 aa).

One can recognise an FAD-binding PCMH-type domain in the interval Arg-32 to Gly-198. Arg-177 is a catalytic residue. Ser-227 serves as the catalytic Proton donor. Glu-297 is a catalytic residue.

Belongs to the MurB family. Requires FAD as cofactor.

It is found in the cytoplasm. It carries out the reaction UDP-N-acetyl-alpha-D-muramate + NADP(+) = UDP-N-acetyl-3-O-(1-carboxyvinyl)-alpha-D-glucosamine + NADPH + H(+). It functions in the pathway cell wall biogenesis; peptidoglycan biosynthesis. Cell wall formation. The sequence is that of UDP-N-acetylenolpyruvoylglucosamine reductase from Clostridioides difficile (strain 630) (Peptoclostridium difficile).